Here is a 155-residue protein sequence, read N- to C-terminus: Ribosomal RNA large subunit methyltransferase H (155 aa).

Residues Leu-72, Gly-103, and Leu-122 to Leu-127 each bind S-adenosyl-L-methionine.

The protein belongs to the RNA methyltransferase RlmH family. Homodimer.

The protein localises to the cytoplasm. The catalysed reaction is pseudouridine(1915) in 23S rRNA + S-adenosyl-L-methionine = N(3)-methylpseudouridine(1915) in 23S rRNA + S-adenosyl-L-homocysteine + H(+). Its function is as follows. Specifically methylates the pseudouridine at position 1915 (m3Psi1915) in 23S rRNA. This chain is Ribosomal RNA large subunit methyltransferase H, found in Salmonella dublin (strain CT_02021853).